We begin with the raw amino-acid sequence, 462 residues long: Cysteine--tRNA ligase (462 aa).

C30 is a Zn(2+) binding site. The 'HIGH' region motif lies at 32-42 (MTVYDYCHIGH). Zn(2+) contacts are provided by C214, H239, and E243. Residues 271-275 (KMSKS) carry the 'KMSKS' region motif. K274 lines the ATP pocket.

It belongs to the class-I aminoacyl-tRNA synthetase family. Monomer. It depends on Zn(2+) as a cofactor.

Its subcellular location is the cytoplasm. The enzyme catalyses tRNA(Cys) + L-cysteine + ATP = L-cysteinyl-tRNA(Cys) + AMP + diphosphate. This is Cysteine--tRNA ligase from Herminiimonas arsenicoxydans.